Consider the following 382-residue polypeptide: Succinyl-diaminopimelate desuccinylase (382 aa).

Residue His-73 coordinates Zn(2+). The active site involves Asp-75. Zn(2+) is bound at residue Asp-106. Glu-140 serves as the catalytic Proton acceptor. 3 residues coordinate Zn(2+): Glu-141, Glu-169, and His-355.

Belongs to the peptidase M20A family. DapE subfamily. Homodimer. Requires Zn(2+) as cofactor. Co(2+) serves as cofactor.

It catalyses the reaction N-succinyl-(2S,6S)-2,6-diaminopimelate + H2O = (2S,6S)-2,6-diaminopimelate + succinate. Its pathway is amino-acid biosynthesis; L-lysine biosynthesis via DAP pathway; LL-2,6-diaminopimelate from (S)-tetrahydrodipicolinate (succinylase route): step 3/3. Functionally, catalyzes the hydrolysis of N-succinyl-L,L-diaminopimelic acid (SDAP), forming succinate and LL-2,6-diaminopimelate (DAP), an intermediate involved in the bacterial biosynthesis of lysine and meso-diaminopimelic acid, an essential component of bacterial cell walls. The polypeptide is Succinyl-diaminopimelate desuccinylase (Cellvibrio japonicus (strain Ueda107) (Pseudomonas fluorescens subsp. cellulosa)).